The sequence spans 598 residues: 4-coumarate--CoA ligase-like 6 (598 aa).

The ATP site is built by Ser-232, Ser-233, Gly-234, Thr-235, Thr-236, and Lys-240. Arg-318 lines the CoA pocket. The SBD1 stretch occupies residues 320–389 (DLAAAARAVE…TVFPSVQIVQ (70 aa)). (E)-4-coumaroyl-AMP contacts are provided by Gly-367, Gln-389, and Thr-394. Gln-389, Thr-394, Asp-475, and Arg-490 together coordinate ATP. The interval 390-454 (SYGLTESTGP…IRGPVVMKGY (65 aa)) is SBD2. 2 residues coordinate (E)-4-coumaroyl-AMP: Lys-492 and Lys-496. Lys-498 and Gly-499 together coordinate CoA. Lys-581 is a binding site for ATP.

The protein belongs to the ATP-dependent AMP-binding enzyme family. Requires Mg(2+) as cofactor.

The enzyme catalyses (E)-4-coumarate + ATP + CoA = (E)-4-coumaroyl-CoA + AMP + diphosphate. It carries out the reaction (E)-4-coumarate + ATP + H(+) = (E)-4-coumaroyl-AMP + diphosphate. It catalyses the reaction (E)-4-coumaroyl-AMP + CoA = (E)-4-coumaroyl-CoA + AMP + H(+). Functionally, carboxylate--CoA ligase that may use 4-coumarate as substrate. Follows a two-step reaction mechanism, wherein the carboxylate substrate first undergoes adenylation by ATP, followed by a thioesterification in the presence of CoA to yield the final CoA thioester. The polypeptide is 4-coumarate--CoA ligase-like 6 (4CLL6) (Oryza sativa subsp. japonica (Rice)).